A 677-amino-acid chain; its full sequence is DNA ligase (677 aa).

NAD(+) is bound by residues 35–39 (DAEYD), 84–85 (SL), and glutamate 116. Lysine 118 functions as the N6-AMP-lysine intermediate in the catalytic mechanism. Residues arginine 139, glutamate 176, lysine 295, and lysine 319 each coordinate NAD(+). Residues cysteine 413, cysteine 416, cysteine 431, and cysteine 437 each contribute to the Zn(2+) site. The region spanning 596–677 (LDELPLAGQV…MLAMFADLEG (82 aa)) is the BRCT domain.

It belongs to the NAD-dependent DNA ligase family. LigA subfamily. Requires Mg(2+) as cofactor. The cofactor is Mn(2+).

The enzyme catalyses NAD(+) + (deoxyribonucleotide)n-3'-hydroxyl + 5'-phospho-(deoxyribonucleotide)m = (deoxyribonucleotide)n+m + AMP + beta-nicotinamide D-nucleotide.. Functionally, DNA ligase that catalyzes the formation of phosphodiester linkages between 5'-phosphoryl and 3'-hydroxyl groups in double-stranded DNA using NAD as a coenzyme and as the energy source for the reaction. It is essential for DNA replication and repair of damaged DNA. This Pseudoalteromonas atlantica (strain T6c / ATCC BAA-1087) protein is DNA ligase.